Consider the following 901-residue polypeptide: MLIKLLTKVFGSRNDRTLRRMRKVVNIINAMEPEMEKLSDEELKGKTAEFRARLEKGEVLENLIPEAFAVVREASKRVFGMRHFDVQLLGGMVLNERCIAEMRTGEGKTLTATLPAYLNALTGKGVHVVTVNDYLAQRDAENNRPLFEFLGLTVGINLPGMPAPAKREAYAADITYGTNNEYGFDYLRDNMAFSPEERVQRKLHYALVDEVDSILIDEARTPLIISGPVEDSSEMYKRVNKIIPHLIRQEKEDSETFQGEGHFSVDEKSRQVNLTERGLVLIEELLVKEGIMDEGESLYSPANIMLMHHVTAALRAHALFTRDVDYIVKDGEVIIVDEHTGRTMQGRRWSDGLHQAVEAKEGVQIQNENQTLASITFQNYFRLYEKLAGMTGTADTEAFEFSSIYKLDTVVVPTNRPMIRKDLPDLVYMTEAEKIQAIIEDIKERTAKGQPVLVGTISIEKSELVSNELTKAGIKHNVLNAKFHANEAAIVAQAGYPAAVTIATNMAGRGTDIVLGGSWQAEVAALENPTAEQIEKIKADWQVRHDAVLAAGGLHIIGTERHESRRIDNQLRGRSGRQGDAGSSRFYLSMEDALMRIFAPDRVSGMMRKLGMKPGEAIEHPWVTKAIANAQRKVESRNFDIRKQLLEYDDVANDQRRAIYSQRNELLDVSDVSETINSIREDVFKATIDAYIPPQSLEEMWDIPGLQERLKNDFDLDLPIAEWLDKEPELHEETLRERILAQSIEVYQRKEEVVGAEMMRHFEKGVMLQTLDSLWKEHQAAMDYLRQGIHLRGYAQKDPKQEYKRESFSMFAAMLESLKYEVISTLSKVQVRMPEEVEELEQQRRMEAERLAQMQQLSHQDDDSAAAAALAAQTGERKVGRNDPCPCGSGKKYKQCHGRLQ.

ATP is bound by residues Q87, G105–T109, and D512. The segment at H859–Q901 is disordered. 4 residues coordinate Zn(2+): C885, C887, C896, and H897. Basic residues predominate over residues K891 to Q901.

The protein belongs to the SecA family. As to quaternary structure, monomer and homodimer. Part of the essential Sec protein translocation apparatus which comprises SecA, SecYEG and auxiliary proteins SecDF-YajC and YidC. It depends on Zn(2+) as a cofactor.

The protein resides in the cell inner membrane. It is found in the cytoplasm. The catalysed reaction is ATP + H2O + cellular proteinSide 1 = ADP + phosphate + cellular proteinSide 2.. In terms of biological role, part of the Sec protein translocase complex. Interacts with the SecYEG preprotein conducting channel. Has a central role in coupling the hydrolysis of ATP to the transfer of proteins into and across the cell membrane, serving both as a receptor for the preprotein-SecB complex and as an ATP-driven molecular motor driving the stepwise translocation of polypeptide chains across the membrane. This Shigella dysenteriae serotype 1 (strain Sd197) protein is Protein translocase subunit SecA.